The sequence spans 263 residues: TLC domain-containing protein 4 (263 aa).

Helical transmembrane passes span 7–27, 53–73, 90–110, and 124–144; these read LLIS…YFVS, VVST…FLFD, VNIA…ILYW, and ASLY…IGNF. Residues 44 to 246 form the TLC domain; the sequence is KKKIEWNSRV…ISKGCIKVIS (203 aa). An N6-acetyllysine modification is found at Lys-165. Helical transmembrane passes span 173 to 193 and 211 to 231; these read IVIN…ASML and LGVL…VMNV.

The protein belongs to the TLCD4 family.

Its subcellular location is the membrane. The protein is TLC domain-containing protein 4 of Homo sapiens (Human).